Here is a 384-residue protein sequence, read N- to C-terminus: Dual specificity protein phosphatase 5 (384 aa).

Positions 19 to 141 constitute a Rhodanese domain; it reads AEARCVVLDC…FYSQYPECCV (123 aa). A Nuclear localization signal motif is present at residues 53-74; that stretch reads RRARGGAVSARYVLADEAARAR. Residues 178 to 319 form the Tyrosine-protein phosphatase domain; that stretch reads GPVEILPFLY…LLQYESEILP (142 aa). C263 acts as the Phosphocysteine intermediate in catalysis.

The protein belongs to the protein-tyrosine phosphatase family. Non-receptor class dual specificity subfamily.

The protein resides in the nucleus. It carries out the reaction O-phospho-L-tyrosyl-[protein] + H2O = L-tyrosyl-[protein] + phosphate. It catalyses the reaction O-phospho-L-seryl-[protein] + H2O = L-seryl-[protein] + phosphate. The catalysed reaction is O-phospho-L-threonyl-[protein] + H2O = L-threonyl-[protein] + phosphate. In terms of biological role, dual specificity protein phosphatase; active with phosphotyrosine, phosphoserine and phosphothreonine residues. The highest relative activity is toward ERK1. In Rattus norvegicus (Rat), this protein is Dual specificity protein phosphatase 5 (Dusp5).